Consider the following 143-residue polypeptide: Mediator of RNA polymerase II transcription subunit 10 (143 aa).

A disordered region spans residues G123–S143. Polar residues predominate over residues A124–S143.

The protein belongs to the Mediator complex subunit 10 family. In terms of assembly, component of the Mediator complex.

The protein resides in the nucleus. Functionally, component of the Mediator complex, a coactivator involved in the regulated transcription of nearly all RNA polymerase II-dependent genes. Mediator functions as a bridge to convey information from gene-specific regulatory proteins to the basal RNA polymerase II transcription machinery. Mediator is recruited to promoters by direct interactions with regulatory proteins and serves as a scaffold for the assembly of a functional preinitiation complex with RNA polymerase II and the general transcription factors. This Yarrowia lipolytica (strain CLIB 122 / E 150) (Yeast) protein is Mediator of RNA polymerase II transcription subunit 10 (NUT2).